We begin with the raw amino-acid sequence, 303 residues long: Methionyl-tRNA formyltransferase (303 aa).

108-111 (SDLP) serves as a coordination point for (6S)-5,6,7,8-tetrahydrofolate.

It belongs to the Fmt family.

The catalysed reaction is L-methionyl-tRNA(fMet) + (6R)-10-formyltetrahydrofolate = N-formyl-L-methionyl-tRNA(fMet) + (6S)-5,6,7,8-tetrahydrofolate + H(+). Its function is as follows. Attaches a formyl group to the free amino group of methionyl-tRNA(fMet). The formyl group appears to play a dual role in the initiator identity of N-formylmethionyl-tRNA by promoting its recognition by IF2 and preventing the misappropriation of this tRNA by the elongation apparatus. The protein is Methionyl-tRNA formyltransferase of Rickettsia rickettsii (strain Iowa).